The chain runs to 518 residues: MRAGRRVAISAGSLAVLLGALDTYVVVTIMRDIMNSVGIPINQLHRITWIVTMYLLGYIAAMPLLGRASDRFGRKLMLQVSLAGFIIGSVVTALAGHFGDFHMLIAGRTIQGVASGALLPITLALGADLWSQRNRAGVLGGIGAAQELGSVLGPLYGIFIVWLLHDWRDVFWINVPLTAIAMVMIHFSLPSHDRSTEPERVDLVGGLLLALALGLAVIGLYNPNPDGKHVLPDYGAPLLVGALVAAVAFFGWERFARTRLIDPAGVHFRPFLSALGASVAAGAALMVTLVDVELFGQGVLQMDQAQAAGMLLWFLIALPIGAVTGGWIATRAGDRAVAFAGLLIAAYGYWLISHWPVDLLADRHNILGLFTVPAMHTDLVVAGLGLGLVIGPLSSATLRVVPSAQHGIASAAVVVARMTGMLIGVAALSAWGLYRFNQILAGLSAAIPPNASLLERAAAIGARYQQAFALMYGEIFTITAIVCVFGAVLGLLISGRKEHADEPEVQEQPTLAPQVEPL.

14 consecutive transmembrane segments (helical) span residues 7–27, 46–66, 76–96, 110–130, 144–164, 170–190, 201–221, 230–250, 270–290, 308–328, 337–357, 379–401, 408–428, and 475–495; these read VAISAGSLAVLLGALDTYVVV, RITWIVTMYLLGYIAAMPLLG, LMLQVSLAGFIIGSVVTALAG, IQGVASGALLPITLALGADLW, AAQELGSVLGPLYGIFIVWLL, VFWINVPLTAIAMVMIHFSLP, VDLVGGLLLALALGLAVIGLY, VLPDYGAPLLVGALVAAVAFF, PFLSALGASVAAGAALMVTLV, AGMLLWFLIALPIGAVTGGWI, VAFAGLLIAAYGYWLISHWPV, LVVAGLGLGLVIGPLSSATLRVV, IASAAVVVARMTGMLIGVAAL, and IFTITAIVCVFGAVLGLLISG.

It belongs to the major facilitator superfamily.

The protein localises to the cell inner membrane. With respect to regulation, inhibited by CCCP and valinomycin. Its function is as follows. In association with lipoprotein LprG probably transports triacylglycerides (TAG) across the inner cell membrane into the periplasm; TAG probably regulates lipid metabolism and growth regulation. Confers resistance to several drugs such as rifampicin, clofazimine and novobiocin; is also part of the oxidative stress response and is needed to maintain normal growth characteristics. Probably an efflux transporter, involved in maintaining correct cell wall permeability. Probably required with LprG for normal surface localization of lipoarabinomannan (LAM). Required for optimal growth on cholesterol. The protein is Probable triacylglyceride transporter BCG_1471c of Mycobacterium bovis (strain BCG / Pasteur 1173P2).